A 407-amino-acid polypeptide reads, in one-letter code: Serine hydroxymethyltransferase (407 aa).

(6S)-5,6,7,8-tetrahydrofolate is bound by residues leucine 117 and 121–123; that span reads GHL. At lysine 226 the chain carries N6-(pyridoxal phosphate)lysine. Glutamate 242 contacts (6S)-5,6,7,8-tetrahydrofolate.

Belongs to the SHMT family. As to quaternary structure, homodimer. Requires pyridoxal 5'-phosphate as cofactor.

It localises to the cytoplasm. The enzyme catalyses (6R)-5,10-methylene-5,6,7,8-tetrahydrofolate + glycine + H2O = (6S)-5,6,7,8-tetrahydrofolate + L-serine. The protein operates within one-carbon metabolism; tetrahydrofolate interconversion. It participates in amino-acid biosynthesis; glycine biosynthesis; glycine from L-serine: step 1/1. Functionally, catalyzes the reversible interconversion of serine and glycine with tetrahydrofolate (THF) serving as the one-carbon carrier. This reaction serves as the major source of one-carbon groups required for the biosynthesis of purines, thymidylate, methionine, and other important biomolecules. Also exhibits THF-independent aldolase activity toward beta-hydroxyamino acids, producing glycine and aldehydes, via a retro-aldol mechanism. This Thermus thermophilus (strain ATCC BAA-163 / DSM 7039 / HB27) protein is Serine hydroxymethyltransferase.